The following is a 339-amino-acid chain: Phenylalanine--tRNA ligase alpha subunit (339 aa).

E247 is a Mg(2+) binding site.

Belongs to the class-II aminoacyl-tRNA synthetase family. Phe-tRNA synthetase alpha subunit type 1 subfamily. As to quaternary structure, tetramer of two alpha and two beta subunits. Mg(2+) serves as cofactor.

Its subcellular location is the cytoplasm. The enzyme catalyses tRNA(Phe) + L-phenylalanine + ATP = L-phenylalanyl-tRNA(Phe) + AMP + diphosphate + H(+). The chain is Phenylalanine--tRNA ligase alpha subunit from Deinococcus deserti (strain DSM 17065 / CIP 109153 / LMG 22923 / VCD115).